The primary structure comprises 84 residues: Large ribosomal subunit protein uL23 (84 aa).

The protein belongs to the universal ribosomal protein uL23 family. As to quaternary structure, part of the 50S ribosomal subunit. Contacts protein L29.

Functionally, binds to 23S rRNA. One of the proteins that surrounds the polypeptide exit tunnel on the outside of the ribosome. This Halobacterium salinarum (strain ATCC 700922 / JCM 11081 / NRC-1) (Halobacterium halobium) protein is Large ribosomal subunit protein uL23.